A 957-amino-acid polypeptide reads, in one-letter code: Retinoblastoma-related protein 1 (957 aa).

The domain A stretch occupies residues 369–569 (TPVSTAMTTA…EKGSSMYNSL (201 aa)). Residues 369 to 808 (TPVSTAMTTA…NEVFIPTVKP (440 aa)) are pocket. The spacer stretch occupies residues 570–677 (IVARPTLSAE…PAAGGETCAE (108 aa)). Residues 678 to 808 (TGIGVFLSKI…NEVFIPTVKP (131 aa)) are domain B. The interval 814–854 (GPGTSPNRNNEPKSGGDAASFPESPRLSRFPNLPDMSPKKV) is disordered.

This sequence belongs to the retinoblastoma protein (RB) family.

It is found in the nucleus. Functionally, regulator of biological processes that recruits a histone deacetylase to control gene transcription. May play a role in the entry into mitosis, negatively regulating the cell proliferation. Formation of stable complexes with geminiviridae replication-associated proteins may create a cellular environment which favors viral DNA replication. The protein is Retinoblastoma-related protein 1 (RBR1) of Triticum aestivum (Wheat).